The primary structure comprises 565 residues: Inositol-3-phosphate synthase (565 aa).

NAD(+) is bound by residues glycine 70, glycine 71, asparagine 72, asparagine 73, aspartate 144, serine 180, isoleucine 181, glutamine 191, arginine 194, threonine 231, alanine 232, asparagine 233, threonine 234, glycine 282, serine 283, aspartate 307, serine 310, asparagine 341, asparagine 342, aspartate 343, lysine 356, glycine 394, aspartate 395, aspartate 423, and serine 424. Serine 536 carries the phosphoserine modification. The tract at residues 546–565 is disordered; it reads LHANGHSNGSAKLATNGNGH. The span at 550-565 shows a compositional bias: polar residues; it reads GHSNGSAKLATNGNGH.

The protein belongs to the myo-inositol 1-phosphate synthase family. It depends on NAD(+) as a cofactor. Higher expression in adult heads than bodies.

It is found in the cytoplasm. It carries out the reaction D-glucose 6-phosphate = 1D-myo-inositol 3-phosphate. Its pathway is polyol metabolism; myo-inositol biosynthesis; myo-inositol from D-glucose 6-phosphate: step 1/2. Functionally, key enzyme in myo-inositol biosynthesis pathway that catalyzes the conversion of glucose 6-phosphate to 1-myo-inositol 1-phosphate in a NAD-dependent manner. Rate-limiting enzyme in the synthesis of all inositol-containing compounds. The sequence is that of Inositol-3-phosphate synthase (Inos) from Drosophila melanogaster (Fruit fly).